Reading from the N-terminus, the 339-residue chain is MIRVAINGYGRIGRSILRALYESAKRDRIQIVAINELAKPEAMLHLTQYDTTHGRFHTQVKLDNQHMIIGDDAIKLLHEPDPAKLPWKEMDIDIVFEATGVINDRLECEAHIQAGAKQVLISHPSSSDVDATIVFGVNQDLLKAEHTVVSNASCTTNCIVPVIDVLDRHFEVKSGAITTIHSAMNDQQVIDAYHDDLRRTRAAGQSIIPVDTKLARGIERILPHMKDKFEAISVRVPTINVTAIDLSVTLNKRVDIETVNQVLKQATEGSFSGVVGFTNEPLVSCDFNHDPRSSIVDGTQTRVSDGHLVKLLLWCDNEWGFANRMLDTSLEMIKAKSRT.

NAD(+) is bound at residue 11-12; it reads RI. Residues 153–155, R199, 212–213, and R235 each bind substrate; these read SCT and TK. C154 acts as the Nucleophile in catalysis. N317 contributes to the NAD(+) binding site.

Belongs to the glyceraldehyde-3-phosphate dehydrogenase family. Epd subfamily. As to quaternary structure, homotetramer.

It is found in the cytoplasm. It catalyses the reaction D-erythrose 4-phosphate + NAD(+) + H2O = 4-phospho-D-erythronate + NADH + 2 H(+). It functions in the pathway cofactor biosynthesis; pyridoxine 5'-phosphate biosynthesis; pyridoxine 5'-phosphate from D-erythrose 4-phosphate: step 1/5. Functionally, catalyzes the NAD-dependent conversion of D-erythrose 4-phosphate to 4-phosphoerythronate. In Shewanella pealeana (strain ATCC 700345 / ANG-SQ1), this protein is D-erythrose-4-phosphate dehydrogenase.